Here is a 705-residue protein sequence, read N- to C-terminus: MKLILCTVLSLGIAAVCFAAPPKSVIRWCTISSPEEKKCNNLRDLTQQERISLTCVQKATYLDCIKAIANNEADAISLDGGQAFEAGLAPYKLKPIAAEVYEHTEGSTTSYYAVAVVKKGTEFTVNDLQGKTSCHTGLGRSAGWNIPIGTLLHRGAIEWEGIESGSVEQAVAKFFSASCVPGATIEQKLCRQCKGDPKTKCARNAPYSGYSGAFHCLKDGKGDVAFVKHTTVNENAPDQKDEYELLCLDGSRQPVDNYKTCNWARVAAHAVVARDDNKVEDIWSFLSKAQSDFGVDTKSDFHLFGPPGKKDPVLKDLLFKDSAIMLKRVPSLMDSQLYLGFEYYSAIQSMRKDQLTPSPRENRIQWCAVGKDEKSKCDRWSVVSNGDVECTVVDETKDCIIKIMKGEADAVALDGGLVYTAGVCGLVPVMAERYDDESQCSKTDERPASYFAVAVARKDSNVNWNNLKGKKSCHTAVGRTAGWVIPMGLIHNRTGTCNFDEYFSEGCAPGSPPNSRLCQLCQGSGGIPPEKCVASSHEKYFGYTGALRCLVEKGDVAFIQHSTVEENTGGKNKADWAKNLQMDDFELLCTDGRRANVMDYRECNLAEVPTHAVVVRPEKANKIRDLLERQEKRFGVNGSEKSKFMMFESQNKDLLFKDLTKCLFKVREGTTYKEFLGDKFYTVISSLKTCNPSDILQMCSFLEGK.

An N-terminal signal peptide occupies residues 1–19 (MKLILCTVLSLGIAAVCFA). Transferrin-like domains follow at residues 26-352 (IRWC…SMRK) and 364-689 (IQWC…SLKT). Disulfide bonds link Cys-29–Cys-64 and Cys-39–Cys-55. The Fe(3+) site is built by Asp-79 and Tyr-111. Intrachain disulfides connect Cys-134-Cys-216, Cys-179-Cys-193, Cys-190-Cys-201, and Cys-247-Cys-261. The hydrogencarbonate site is built by Thr-136, Arg-140, Ala-142, and Gly-143. Residue Tyr-210 participates in Fe(3+) binding. His-269 contributes to the Fe(3+) binding site. Residues 352-360 (KDQLTPSPR) are connecting region. 2 cysteine pairs are disulfide-bonded: Cys-367–Cys-399 and Cys-377–Cys-390. Fe(3+)-binding residues include Asp-414 and Tyr-450. 7 cysteine pairs are disulfide-bonded: Cys-424–Cys-699, Cys-440–Cys-662, Cys-473–Cys-549, Cys-497–Cys-690, Cys-507–Cys-521, Cys-518–Cys-532, and Cys-589–Cys-603. Hydrogencarbonate contacts are provided by Thr-475, Arg-479, Ala-481, and Gly-482. The N-linked (GlcNAc...) asparagine glycan is linked to Asn-492. Tyr-543 provides a ligand contact to Fe(3+). His-611 is a Fe(3+) binding site.

The protein belongs to the transferrin family. Monomer. Different forms of hen transferrin are distinguished by their carbohydrate composition. Ovotransferrin and embryo serum transferrin but not adult serum transferrin, have bisecting N-acetylglucosamine. Transferrin secreted by embryo hepatocytes in primary culture is marked by the presence of (alpha1-6) fucosylation of the core N-acetylglucosamine. Serum transferrins also differ in the number of attached neuraminic acid residues. In both embryo forms, sialylation occurs on the Man (alpha 1-3)-linked antennae. As to expression, expressed in the magnum of the oviduct (at protein level).

The protein localises to the secreted. Functionally, transferrins are iron binding transport proteins which can bind two Fe(3+) ions in association with the binding of an anion, usually bicarbonate. Responsible for the transport of iron from sites of absorption and heme degradation to those of storage and utilization. There are two forms of hen transferrin, ovotransferrin, found in the ovoducts and, serum transferrin, secreted by the liver. Serum transferrin may also have a role in stimulating cell proliferation and is regulated by iron levels. Ovotransferrin has a bacteriostatic function and, is not controlled by iron levels. This chain is Ovotransferrin, found in Gallus gallus (Chicken).